The following is a 316-amino-acid chain: 4-hydroxy-3-methylbut-2-enyl diphosphate reductase (316 aa).

Position 12 (cysteine 12) interacts with [4Fe-4S] cluster. Residues histidine 41 and histidine 74 each contribute to the (2E)-4-hydroxy-3-methylbut-2-enyl diphosphate site. Dimethylallyl diphosphate contacts are provided by histidine 41 and histidine 74. Isopentenyl diphosphate is bound by residues histidine 41 and histidine 74. Residue cysteine 96 participates in [4Fe-4S] cluster binding. Histidine 124 lines the (2E)-4-hydroxy-3-methylbut-2-enyl diphosphate pocket. Residue histidine 124 participates in dimethylallyl diphosphate binding. An isopentenyl diphosphate-binding site is contributed by histidine 124. Catalysis depends on glutamate 126, which acts as the Proton donor. Residue threonine 168 participates in (2E)-4-hydroxy-3-methylbut-2-enyl diphosphate binding. Cysteine 198 provides a ligand contact to [4Fe-4S] cluster. Positions 226, 227, 228, and 270 each coordinate (2E)-4-hydroxy-3-methylbut-2-enyl diphosphate. Residues serine 226, serine 227, asparagine 228, and serine 270 each coordinate dimethylallyl diphosphate. Serine 226, serine 227, asparagine 228, and serine 270 together coordinate isopentenyl diphosphate.

This sequence belongs to the IspH family. [4Fe-4S] cluster serves as cofactor.

It carries out the reaction isopentenyl diphosphate + 2 oxidized [2Fe-2S]-[ferredoxin] + H2O = (2E)-4-hydroxy-3-methylbut-2-enyl diphosphate + 2 reduced [2Fe-2S]-[ferredoxin] + 2 H(+). The catalysed reaction is dimethylallyl diphosphate + 2 oxidized [2Fe-2S]-[ferredoxin] + H2O = (2E)-4-hydroxy-3-methylbut-2-enyl diphosphate + 2 reduced [2Fe-2S]-[ferredoxin] + 2 H(+). It participates in isoprenoid biosynthesis; dimethylallyl diphosphate biosynthesis; dimethylallyl diphosphate from (2E)-4-hydroxy-3-methylbutenyl diphosphate: step 1/1. It functions in the pathway isoprenoid biosynthesis; isopentenyl diphosphate biosynthesis via DXP pathway; isopentenyl diphosphate from 1-deoxy-D-xylulose 5-phosphate: step 6/6. Functionally, catalyzes the conversion of 1-hydroxy-2-methyl-2-(E)-butenyl 4-diphosphate (HMBPP) into a mixture of isopentenyl diphosphate (IPP) and dimethylallyl diphosphate (DMAPP). Acts in the terminal step of the DOXP/MEP pathway for isoprenoid precursor biosynthesis. This chain is 4-hydroxy-3-methylbut-2-enyl diphosphate reductase, found in Acinetobacter baylyi (strain ATCC 33305 / BD413 / ADP1).